A 241-amino-acid chain; its full sequence is Chloride intracellular channel protein 1 (241 aa).

A2 carries the post-translational modification N-acetylalanine. Residues 2–90 (AEEQPQVELF…EEFLEAVLCP (89 aa)) are required for insertion into the membrane. Residue K13 is modified to N6-acetyllysine. The short motif at 24-27 (CPFS) is the G-site element. Residues C24 and C59 are joined by a disulfide bond. A helical transmembrane segment spans residues 26–46 (FSQRLFMVLWLKGVTFNVTTV). Residues 93 to 233 (YPKLAALNPE…PDDEEIELAY (141 aa)) form the GST C-terminal domain. Residue K119 is modified to N6-acetyllysine. A Phosphoserine modification is found at S121. K131 is subject to N6-acetyllysine. 2 positions are modified to phosphoserine: S156 and S211. Phosphotyrosine is present on Y233.

Belongs to the chloride channel CLIC family. Monomer. Homodimer (in vitro). Interacts with TRAPPC2. Dimerization requires a conformation change that leads to the exposure of a large hydrophobic surface. In vivo, this may lead to membrane insertion. In terms of tissue distribution, expressed in neonatal and adult cardiomyocytes (at protein level).

It is found in the nucleus. The protein resides in the nucleus membrane. Its subcellular location is the cytoplasm. The protein localises to the cell membrane. It localises to the endoplasmic reticulum. It catalyses the reaction L-dehydroascorbate + 2 glutathione = glutathione disulfide + L-ascorbate. The enzyme catalyses chloride(in) = chloride(out). It carries out the reaction iodide(out) = iodide(in). The catalysed reaction is thiocyanate(in) = thiocyanate(out). It catalyses the reaction nitrate(in) = nitrate(out). The enzyme catalyses bromide(in) = bromide(out). It carries out the reaction fluoride(in) = fluoride(out). Its function is as follows. In the soluble state, catalyzes glutaredoxin-like thiol disulfide exchange reactions with reduced glutathione as electron donor. Reduces selenite and dehydroascorbate and may act as an antioxidant during oxidative stress response. Can insert into membranes and form voltage-dependent multi-ion conductive channels. Membrane insertion seems to be redox-regulated and may occur only under oxidizing conditions. Involved in regulation of the cell cycle. This is Chloride intracellular channel protein 1 from Rattus norvegicus (Rat).